A 298-amino-acid polypeptide reads, in one-letter code: N-acetylmuramic acid 6-phosphate etherase (298 aa).

Positions 55-218 constitute an SIS domain; the sequence is IHTQVSGGGR…STGLMIKSGK (164 aa). The Proton donor role is filled by Glu-83. Glu-114 is an active-site residue.

This sequence belongs to the GCKR-like family. MurNAc-6-P etherase subfamily. Homodimer.

It catalyses the reaction N-acetyl-D-muramate 6-phosphate + H2O = N-acetyl-D-glucosamine 6-phosphate + (R)-lactate. It participates in amino-sugar metabolism; 1,6-anhydro-N-acetylmuramate degradation. Its pathway is amino-sugar metabolism; N-acetylmuramate degradation. It functions in the pathway cell wall biogenesis; peptidoglycan recycling. Its function is as follows. Specifically catalyzes the cleavage of the D-lactyl ether substituent of MurNAc 6-phosphate, producing GlcNAc 6-phosphate and D-lactate. Together with AnmK, is also required for the utilization of anhydro-N-acetylmuramic acid (anhMurNAc) either imported from the medium or derived from its own cell wall murein, and thus plays a role in cell wall recycling. In Escherichia coli O127:H6 (strain E2348/69 / EPEC), this protein is N-acetylmuramic acid 6-phosphate etherase.